We begin with the raw amino-acid sequence, 185 residues long: NEDD8-conjugating enzyme UBE2F (185 aa).

Residues M1–R29 are interaction with UBA3. Residues D11 to V30 are disordered. Residues V32–R185 form the UBC core domain. The active-site Glycyl thioester intermediate is C116.

Belongs to the ubiquitin-conjugating enzyme family. UBE2F subfamily.

The catalysed reaction is [E1 NEDD8-activating enzyme]-S-[NEDD8 protein]-yl-L-cysteine + [E2 NEDD8-conjugating enzyme]-L-cysteine = [E1 NEDD8-activating enzyme]-L-cysteine + [E2 NEDD8-conjugating enzyme]-S-[NEDD8-protein]-yl-L-cysteine.. Its pathway is protein modification; protein neddylation. Accepts the ubiquitin-like protein NEDD8 from the UBA3-NAE1 E1 complex and catalyzes its covalent attachment to other proteins. Together with the E3 ubiquitin ligase RNF7/RBX2, specifically neddylates cullin-5 (CUL5). Does not neddylate CUL1, CUL2, CUL3, CUL4A or CUL4B. The protein is NEDD8-conjugating enzyme UBE2F (UBE2F) of Gallus gallus (Chicken).